Reading from the N-terminus, the 182-residue chain is Ribosome-recycling factor (182 aa).

Belongs to the RRF family.

It is found in the cytoplasm. Its function is as follows. Responsible for the release of ribosomes from messenger RNA at the termination of protein biosynthesis. May increase the efficiency of translation by recycling ribosomes from one round of translation to another. The sequence is that of Ribosome-recycling factor from Parasynechococcus marenigrum (strain WH8102).